A 515-amino-acid polypeptide reads, in one-letter code: Histidine ammonia-lyase (515 aa).

The 5-imidazolinone (Ala-Gly) cross-link spans 146 to 148 (ASG). 2,3-didehydroalanine (Ser) is present on serine 147.

This sequence belongs to the PAL/histidase family. Contains an active site 4-methylidene-imidazol-5-one (MIO), which is formed autocatalytically by cyclization and dehydration of residues Ala-Ser-Gly.

It is found in the cytoplasm. It catalyses the reaction L-histidine = trans-urocanate + NH4(+). It participates in amino-acid degradation; L-histidine degradation into L-glutamate; N-formimidoyl-L-glutamate from L-histidine: step 1/3. The chain is Histidine ammonia-lyase (hutH) from Ralstonia nicotianae (strain ATCC BAA-1114 / GMI1000) (Ralstonia solanacearum).